A 930-amino-acid chain; its full sequence is Kinesin-like protein KIN-7J (930 aa).

Positions 9 to 273 (KILVSVRVRP…TLGTVIRKLR (265 aa)) constitute a Kinesin motor domain. 95–102 (GQTSSGKT) provides a ligand contact to ATP. Disordered regions lie at residues 449-569 (LKNS…IGTD) and 655-686 (MQTK…SLKD). Over residues 459–468 (SVEAQESQES) the composition is skewed to low complexity. 2 stretches are compositionally biased toward basic and acidic residues: residues 473–482 (EQMKNEERKM) and 533–558 (AKLD…KDCN). Positions 666–681 (TSSISFDSGSSTSIDT) are enriched in low complexity. Residue Lys-805 forms a Glycyl lysine isopeptide (Lys-Gly) (interchain with G-Cter in ubiquitin) linkage.

The protein belongs to the TRAFAC class myosin-kinesin ATPase superfamily. Kinesin family. KIN-7 subfamily.

This Arabidopsis thaliana (Mouse-ear cress) protein is Kinesin-like protein KIN-7J.